The following is a 287-amino-acid chain: Energy-coupling factor transporter ATP-binding protein EcfA (287 aa).

Positions 19–252 constitute an ABC transporter domain; sequence FEIQNVSFSY…EEFLASSALD (234 aa). An ATP-binding site is contributed by 52–59; the sequence is GHNGSGKS.

The protein belongs to the ABC transporter superfamily. Energy-coupling factor EcfA family. In terms of assembly, forms a stable energy-coupling factor (ECF) transporter complex composed of 2 membrane-embedded substrate-binding proteins (S component), 2 ATP-binding proteins (A component) and 2 transmembrane proteins (T component).

It is found in the cell membrane. ATP-binding (A) component of a common energy-coupling factor (ECF) ABC-transporter complex. Unlike classic ABC transporters this ECF transporter provides the energy necessary to transport a number of different substrates. This is Energy-coupling factor transporter ATP-binding protein EcfA from Malacoplasma penetrans (strain HF-2) (Mycoplasma penetrans).